Reading from the N-terminus, the 86-residue chain is Acyl carrier protein (86 aa).

The Carrier domain maps to 2 to 82 (ATVFERVKKV…AVVDYLKSKG (81 aa)). Position 37 is an O-(pantetheine 4'-phosphoryl)serine (S37).

It belongs to the acyl carrier protein (ACP) family. Post-translationally, 4'-phosphopantetheine is transferred from CoA to a specific serine of apo-ACP by AcpS. This modification is essential for activity because fatty acids are bound in thioester linkage to the sulfhydryl of the prosthetic group.

The protein resides in the cytoplasm. It functions in the pathway lipid metabolism; fatty acid biosynthesis. In terms of biological role, carrier of the growing fatty acid chain in fatty acid biosynthesis. The polypeptide is Acyl carrier protein (Dehalococcoides mccartyi (strain ATCC BAA-2100 / JCM 16839 / KCTC 5957 / BAV1)).